Reading from the N-terminus, the 197-residue chain is Phosphoheptose isomerase (197 aa).

Residues 34–196 (MVHCLLGGNK…DRTLFPQDEQ (163 aa)) enclose the SIS domain. Residue 49 to 51 (NGG) participates in substrate binding. Positions 58 and 62 each coordinate Zn(2+). Residues Glu-62, 91-92 (ND), 117-119 (STS), Ser-122, and Gln-172 each bind substrate. Zn(2+) contacts are provided by Gln-172 and His-180.

Belongs to the SIS family. GmhA subfamily. Homotetramer. Zn(2+) is required as a cofactor.

It localises to the cytoplasm. It catalyses the reaction 2 D-sedoheptulose 7-phosphate = D-glycero-alpha-D-manno-heptose 7-phosphate + D-glycero-beta-D-manno-heptose 7-phosphate. It participates in carbohydrate biosynthesis; D-glycero-D-manno-heptose 7-phosphate biosynthesis; D-glycero-alpha-D-manno-heptose 7-phosphate and D-glycero-beta-D-manno-heptose 7-phosphate from sedoheptulose 7-phosphate: step 1/1. In terms of biological role, catalyzes the isomerization of sedoheptulose 7-phosphate in D-glycero-D-manno-heptose 7-phosphate. The sequence is that of Phosphoheptose isomerase from Shewanella sp. (strain W3-18-1).